Reading from the N-terminus, the 930-residue chain is Short transient receptor potential channel 6 (930 aa).

The interval M1–E27 is disordered. At M1 to G437 the chain is on the cytoplasmic side. ANK repeat units follow at residues I96–V125, M131–V160, D162–G188, and H217–R246. The helical transmembrane segment at P438–M458 threads the bilayer. The Extracellular segment spans residues N459 to K486. The helical transmembrane segment at T487–A507 threads the bilayer. Residues E508–Y520 are Cytoplasmic-facing. Residues L521–I541 form a helical membrane-spanning segment. At A542 to Q591 the chain is on the extracellular side. N560 is a glycosylation site (N-linked (GlcNAc...) asparagine). The chain crosses the membrane as a helical span at residues I592–I612. Residues L613–K635 lie on the Cytoplasmic side of the membrane. Residues F636 to S656 traverse the membrane as a helical segment. Residues Y657–V705 lie on the Extracellular side of the membrane. A helical membrane pass occupies residues L706–I726. Topologically, residues N727–R930 are cytoplasmic. Position 814 is a phosphoserine (S814).

The protein belongs to the transient receptor (TC 1.A.4) family. STrpC subfamily. TRPC6 sub-subfamily. In terms of assembly, homodimer; forms channel complex. Interacts with MX1 and RNF24. Phosphorylated by FYN, leading to an increase of TRPC6 channel activity. Post-translationally, N-glycosylated. In terms of tissue distribution, lung and brain.

The protein resides in the cell membrane. It carries out the reaction Ca(2+)(in) = Ca(2+)(out). Functionally, forms a receptor-activated non-selective calcium permeant cation channel. Probably is operated by a phosphatidylinositol second messenger system activated by receptor tyrosine kinases or G-protein coupled receptors. Activated by diacylglycerol (DAG) in a membrane-delimited fashion, independently of protein kinase C. Seems not to be activated by intracellular calcium store depletion. The polypeptide is Short transient receptor potential channel 6 (Mus musculus (Mouse)).